The following is a 421-amino-acid chain: Early growth response protein 2 (421 aa).

Residues C127–S145 show a composition bias toward low complexity. Disordered stretches follow at residues C127 to D152, S179 to G200, and S223 to Y288. Positions P236 to G247 are enriched in polar residues. C2H2-type zinc fingers lie at residues Y288–H312, F318–H340, and F346–H368.

The protein belongs to the EGR C2H2-type zinc-finger protein family.

Its subcellular location is the nucleus. Its function is as follows. Sequence-specific DNA-binding transcription factor. The protein is Early growth response protein 2 (egr2) of Xenopus laevis (African clawed frog).